The primary structure comprises 263 residues: MRVAVSGFKGRMGHEVVKTVLREADLELVAVLDHEPKEKNINEMVEFSSLDVPVFGNLSEMLEEIKPDCVVDFTTPKVGYSNTKTILEHGVRAVVGTTGFTPEQISELRTIAESKKIGALIAPNFAVGAVLMMQFAQKAAKYFPNVEIIELHHDNKLDAPSGTGVKTAEMMAETREFVKQGAADEVELIEGARGAEYEGMRIHSVRLPGLVAHQEVIFGAEGQGLTIRHDSYDRISFMSGVALSVRKTKELETLIYGLENILD.

NAD(+) is bound by residues 7 to 12 (GFKGRM), 96 to 98 (GTT), and 122 to 125 (APNF). The active-site Proton donor/acceptor is the histidine 152. Histidine 153 lines the (S)-2,3,4,5-tetrahydrodipicolinate pocket. Lysine 156 acts as the Proton donor in catalysis. Position 162 to 163 (162 to 163 (GT)) interacts with (S)-2,3,4,5-tetrahydrodipicolinate.

The protein belongs to the DapB family.

It is found in the cytoplasm. It carries out the reaction (S)-2,3,4,5-tetrahydrodipicolinate + NAD(+) + H2O = (2S,4S)-4-hydroxy-2,3,4,5-tetrahydrodipicolinate + NADH + H(+). The enzyme catalyses (S)-2,3,4,5-tetrahydrodipicolinate + NADP(+) + H2O = (2S,4S)-4-hydroxy-2,3,4,5-tetrahydrodipicolinate + NADPH + H(+). Its pathway is amino-acid biosynthesis; L-lysine biosynthesis via DAP pathway; (S)-tetrahydrodipicolinate from L-aspartate: step 4/4. Its function is as follows. Catalyzes the conversion of 4-hydroxy-tetrahydrodipicolinate (HTPA) to tetrahydrodipicolinate. This Listeria monocytogenes serovar 1/2a (strain ATCC BAA-679 / EGD-e) protein is 4-hydroxy-tetrahydrodipicolinate reductase.